A 191-amino-acid polypeptide reads, in one-letter code: Potassium-transporting ATPase KdpC subunit (191 aa).

A helical transmembrane segment spans residues 10–30; sequence ITLVFCVFFSVFYILVLWLFA.

Belongs to the KdpC family. The system is composed of three essential subunits: KdpA, KdpB and KdpC.

It localises to the cell inner membrane. Part of the high-affinity ATP-driven potassium transport (or Kdp) system, which catalyzes the hydrolysis of ATP coupled with the electrogenic transport of potassium into the cytoplasm. This subunit acts as a catalytic chaperone that increases the ATP-binding affinity of the ATP-hydrolyzing subunit KdpB by the formation of a transient KdpB/KdpC/ATP ternary complex. The sequence is that of Potassium-transporting ATPase KdpC subunit from Bacteroides fragilis (strain ATCC 25285 / DSM 2151 / CCUG 4856 / JCM 11019 / LMG 10263 / NCTC 9343 / Onslow / VPI 2553 / EN-2).